The primary structure comprises 425 residues: MNKMPAGEQECEYNKEGKYYSKGVKLVRKKKKIPGYRWGDIKINIIGEKDDLPIHFCDKCDLPIKIYGRIIPCKHAFCYHCANLYDKVGYKVCPRCRYPVLRIEAHKRGSVFMCSIVQQCKRTYLSQKSLQAHIKRRHKRARKQVTSASLEKVRPHIAPPQTEISDIPKRLQDRDHLSYIPPEQHTMVSLPSVQHMLQEQHNQPHKDIQAPPPELSLSLPFPIQWETVSIFTRKHGNLTVDHIQNNSDSGAKKPTPPDYYPECQSQPAVSSPHHIIPQKQHYAPPPSPSSPVNHQMPYPPQDVVTPNSVRSQVPALTTTYDPSSGYIIVKVPPDMNSPPLRAPQSQNGNPSASEFASHHYNLNILPQFTENQETLSPQFTQTDAMDHRRWPAWKRLSPCPPTRSPPPSTLHGRSHHSHQRRHRRY.

The RING-type zinc finger occupies 57–97; that stretch reads CDKCDLPIKIYGRIIPCKHAFCYHCANLYDKVGYKVCPRCR. Residues 96–154 are HYB domain; sequence CRYPVLRIEAHKRGSVFMCSIVQQCKRTYLSQKSLQAHIKRRHKRARKQVTSASLEKVR. The C2H2-type zinc-finger motif lies at 112 to 138; the sequence is FMCSIVQQCKRTYLSQKSLQAHIKRRH. 2 disordered regions span residues 241 to 297 and 382 to 425; these read DHIQ…HQMP and TDAM…HRRY. Residues 398–408 are compositionally biased toward pro residues; it reads PCPPTRSPPPS. Over residues 412–425 the composition is skewed to basic residues; that stretch reads GRSHHSHQRRHRRY.

As to quaternary structure, homodimer. Exclusively expressed in testis and sperm, including spermatocytes, round and elongated spermatids, and Leydig cells.

It localises to the cytoplasm. It catalyses the reaction S-ubiquitinyl-[E2 ubiquitin-conjugating enzyme]-L-cysteine + [acceptor protein]-L-lysine = [E2 ubiquitin-conjugating enzyme]-L-cysteine + N(6)-ubiquitinyl-[acceptor protein]-L-lysine.. It participates in protein modification; protein ubiquitination. In terms of biological role, E3 ubiquitin ligase catalyzing the covalent attachment of ubiquitin moieties onto substrate proteins. May operate on tyrosine-phosphorylated SRC substrates. This Homo sapiens (Human) protein is E3 ubiquitin-protein ligase CBLL2.